A 127-amino-acid chain; its full sequence is Spore germination protein 2 (127 aa).

The signal sequence occupies residues 1-25 (MNIRNSLILIISTILFFSIINGSLS). Residues N54 and N118 are each glycosylated (N-linked (GlcNAc...) asparagine).

Belongs to the Dictyostelium gerABC family.

Its subcellular location is the secreted. The protein is Spore germination protein 2 (gerB) of Dictyostelium discoideum (Social amoeba).